Reading from the N-terminus, the 451-residue chain is 3-carboxy-cis,cis-muconate cycloisomerase (451 aa).

It belongs to the class-II fumarase/aspartase family. Homotetramer.

It catalyses the reaction 2-(carboxymethyl)-5-oxo-2,5-dihydro-2-furoate = 3-carboxy-cis,cis-muconate + H(+). It functions in the pathway aromatic compound metabolism; beta-ketoadipate pathway; 5-oxo-4,5-dihydro-2-furylacetate from 3-carboxy-cis,cis-muconate: step 1/2. In terms of biological role, catalyzes an anti cycloisomerization. This chain is 3-carboxy-cis,cis-muconate cycloisomerase (pcaB), found in Acinetobacter baylyi (strain ATCC 33305 / BD413 / ADP1).